The following is a 496-amino-acid chain: MVVSDVAGSQSRYDAVLVGAGIMSATLAALLHELDPELSLLMVERLQAPGLESSAAENNAGTGHAANCELNYTPLQPDGSVATAKALAINTAFERSLEFWASLTEKGKLLPQQFLHLVPHISVVFGDADLAFLHQRFQQLSALPAFASMQWSTDVAELAEWMPLVMEGRANAESVAATCIKRGTDVDFGLLTGAYVKSLQASGALELSCGCEVVHLHRLGKHQWNLDLKHSSGSRSVQTPFVFLGAGGGALPLLQRSGIPEAAAYAGFPVSGQWLVCSEPGLTARHHAKVYGKAKVGAPPMSVPHLDSRWIDGCRSLLFGPYAGFSSKFLKQGSRLDLLRSVRRSNFRSMLEVGFKNFDLVTYLLSELQQSEKDRFETLKQFLPNAQLNDWKLSVAGQRVQIIKRTAEGGRLQMGTEVVSAQDGSLAALLGASPGASTAVTVMLEVLQRCWSERMASESWQQRLRKLLPSYGHDPNSEPLLLTQMRIRSNKLLNFT.

Belongs to the MQO family. Requires FAD as cofactor.

It carries out the reaction (S)-malate + a quinone = a quinol + oxaloacetate. Its pathway is carbohydrate metabolism; tricarboxylic acid cycle; oxaloacetate from (S)-malate (quinone route): step 1/1. The chain is Probable malate:quinone oxidoreductase from Prochlorococcus marinus (strain MIT 9313).